The chain runs to 197 residues: Protein LURP-one-related 9 (197 aa).

The protein belongs to the LOR family.

In terms of biological role, might be related to the phospholipid scramblase and tubby-like superfamily of membrane tethered transcription factors. The sequence is that of Protein LURP-one-related 9 from Arabidopsis thaliana (Mouse-ear cress).